A 297-amino-acid polypeptide reads, in one-letter code: N-acetylmuramic acid 6-phosphate etherase (297 aa).

One can recognise an SIS domain in the interval alanine 56 to lysine 219. Glutamate 84 functions as the Proton donor in the catalytic mechanism. Glutamate 115 is an active-site residue.

It belongs to the GCKR-like family. MurNAc-6-P etherase subfamily. In terms of assembly, homodimer.

The enzyme catalyses N-acetyl-D-muramate 6-phosphate + H2O = N-acetyl-D-glucosamine 6-phosphate + (R)-lactate. It participates in amino-sugar metabolism; N-acetylmuramate degradation. Its function is as follows. Specifically catalyzes the cleavage of the D-lactyl ether substituent of MurNAc 6-phosphate, producing GlcNAc 6-phosphate and D-lactate. The chain is N-acetylmuramic acid 6-phosphate etherase from Lactococcus lactis subsp. lactis (strain IL1403) (Streptococcus lactis).